The chain runs to 51 residues: MREKIKLESSAGTGHFYTTTKNKRANPEKLELKKFDPVARKHVMYKETKLK.

A disordered region spans residues 1–23 (MREKIKLESSAGTGHFYTTTKNK). The span at 10 to 20 (SAGTGHFYTTT) shows a compositional bias: polar residues.

It belongs to the bacterial ribosomal protein bL33 family.

This chain is Large ribosomal subunit protein bL33, found in Nitrosomonas eutropha (strain DSM 101675 / C91 / Nm57).